Consider the following 350-residue polypeptide: Divinyl chlorophyll a/b light-harvesting protein PcbB (350 aa).

Transmembrane regions (helical) follow at residues 27 to 47 (FLAA…SFTL), 89 to 109 (IVVT…GGLM), 141 to 161 (FILG…VEWA), 202 to 222 (VMGG…WHIV), 244 to 264 (LSWA…WCAS), and 305 to 325 (LTNI…WHAL).

Belongs to the PsbB/PsbC family. IsiA/Pcb subfamily. As to quaternary structure, the antenna complex consists of divinyl chlorophylls (a and b) and divinyl chlorophyll a/b binding proteins. Under iron-starvation forms a complex with PSI, consisting of a PSI trimer surrounded by a ring composed of 18 PcbB subunits. Divinyl chlorophyll a serves as cofactor. Divinyl chlorophyll b is required as a cofactor.

Its subcellular location is the cellular thylakoid membrane. Functionally, the antenna complex functions as a light receptor, it captures and delivers excitation energy to photosystems I. The Prochlorales pcb genes are not related to higher plant LHCs. The sequence is that of Divinyl chlorophyll a/b light-harvesting protein PcbB (pcbB) from Prochlorococcus marinus (strain MIT 9313).